The chain runs to 554 residues: Glutamine--tRNA ligase (554 aa).

The short motif at proline 34–histidine 44 is the 'HIGH' region element. ATP-binding positions include glutamate 35–asparagine 37 and histidine 41–serine 47. The L-glutamine site is built by aspartate 67 and tyrosine 212. ATP contacts are provided by residues threonine 231, arginine 261–leucine 262, and methionine 269–lysine 271. A 'KMSKS' region motif is present at residues isoleucine 268–arginine 272.

It belongs to the class-I aminoacyl-tRNA synthetase family. In terms of assembly, monomer.

The protein localises to the cytoplasm. The enzyme catalyses tRNA(Gln) + L-glutamine + ATP = L-glutaminyl-tRNA(Gln) + AMP + diphosphate. The protein is Glutamine--tRNA ligase of Serratia proteamaculans (strain 568).